The sequence spans 318 residues: uncharacterized protein (318 aa).

Positions 67–157 (LAFDELEKEK…SLKAIQTSQE (91 aa)) form a coiled coil. Residues 172 to 318 (ESTNKVEKNA…KGFFARLFNL (147 aa)) form a disordered region. 2 stretches are compositionally biased toward basic and acidic residues: residues 175-193 (NKVE…KDSK) and 219-236 (KVDK…EKAS). The span at 237-248 (VEQSKNGNAAET) shows a compositional bias: polar residues. 2 stretches are compositionally biased toward basic and acidic residues: residues 249–274 (SNKE…HAEA) and 300–310 (SEPKPQEEKKG).

This is an uncharacterized protein from Staphylococcus aureus (strain MW2).